The sequence spans 802 residues: Post-transcriptional regulator mkt1 (802 aa).

Residues Ser227, Ser228, and Ser230 each carry the phosphoserine modification.

The protein belongs to the XPG/RAD2 endonuclease family. As to quaternary structure, interacts with pab1 binding protein ath1.

Involved in post-transcriptional regulation of gene expression by 3'-UTR-mediated RNA regulation. Promotes interactions between mRNA and poly(A)-binding protein. Binds the 3' UTR of mRNAs, centromeric transcripts and antisense-rDNA. Required for the establishment but not the maintenance of heterochromatin at pericentromeres, and for the maintenance of small domains of facultative heterochromatin known as HOODs. The polypeptide is Post-transcriptional regulator mkt1 (Schizosaccharomyces pombe (strain 972 / ATCC 24843) (Fission yeast)).